The chain runs to 486 residues: Protein hold'em (486 aa).

The OB DNA-binding region spans 166 to 285 (IITTNVNLLV…DCRLLLAFAA (120 aa)).

The protein belongs to the MEIOB family. In terms of assembly, interacts with mei-9 and Ercc1.

Its function is as follows. Single-stranded DNA-binding protein required for meiosis. May be involved in the resolution of recombination intermediates into crossovers in the meiotic recombination pathway. The chain is Protein hold'em (hdm) from Drosophila melanogaster (Fruit fly).